Consider the following 91-residue polypeptide: MVATNRCCVFALLVALLLIHSLAEAGKGKEVLGKIKNKLVEVKEKIKAGWDKLTSKSEYACPVIDKFCEDHCAAKNAIGKCDDFKCQCLNS.

Positions methionine 1–alanine 25 are cleaved as a signal peptide. A propeptide spanning residues glycine 26–glutamate 44 is cleaved from the precursor. The region spanning glutamate 58–serine 91 is the BetaSPN-type CS-alpha/beta domain. 3 disulfide bridges follow: cysteine 61–cysteine 81, cysteine 68–cysteine 86, and cysteine 72–cysteine 88.

Expressed by the venom gland.

The protein localises to the secreted. Its function is as follows. The full peptide presents antibacterial and cytotoxic activities. The synthetic C-terminus (AA 33-76) inhibits voltage-gated potassium channels Kv1.1/KCNA1, Kv1.2/KCNA2, and Kv1.3/KCNA3. In Tityus discrepans (Venezuelan scorpion), this protein is Potassium channel toxin TdiKIK.